A 111-amino-acid polypeptide reads, in one-letter code: HTH-type transcriptional regulator SinR (111 aa).

The HTH cro/C1-type domain maps to 6–61; the sequence is IKQYRKEKGYSLSELAEKAGVAKSYLSSIERNLQTNPSIQFLEKVSAVLDVSVHTL. A DNA-binding region (H-T-H motif) is located at residues 17-36; it reads LSELAEKAGVAKSYLSSIER. Residues 65–103 form the Sin domain; the sequence is KHETEYDGQLDSEWEKLVRDAMTSGVSKKQFREFLDYQK.

In terms of assembly, homotetramer in the absence of SinI. Heterodimer with SinI. Interaction with SinI disrupts the SinR tetramer and its repressor activity. Interacts with hpr.

In terms of biological role, negative as well as positive regulator of alternate developmental processes that are induced at the end of vegetative growth in response to nutrient depletion. Binds to the alkaline protease (aprE) gene at two sites. Also acts as a repressor of the key sporulation gene spo0A. Negatively regulates transcription of the eps operon, which is responsible for the biosynthesis of an exopolysaccharide involved in biofilm formation; therefore it could govern the transition between a state in which bacteria swim or swarm and a state in which bacteria assemble into multicellular communities. Acts with Hpr as a corepressor of epr expression. Also negatively regulates transcription of the lutABC operon, which is required for lactate utilization. Repressor activity is regulated by SinI. The sequence is that of HTH-type transcriptional regulator SinR (sinR) from Bacillus subtilis (strain 168).